Consider the following 508-residue polypeptide: Photosystem II CP47 reaction center protein (508 aa).

Helical transmembrane passes span 21–36 (SVHI…WAGS), 101–115 (IMFS…IWHW), 140–156 (GIHL…FGAF), 203–218 (IAAG…FHLS), 237–252 (VLSS…AFVV), and 457–472 (SFAL…HGAR).

The protein belongs to the PsbB/PsbC family. PsbB subfamily. As to quaternary structure, PSII is composed of 1 copy each of membrane proteins PsbA, PsbB, PsbC, PsbD, PsbE, PsbF, PsbH, PsbI, PsbJ, PsbK, PsbL, PsbM, PsbT, PsbX, PsbY, PsbZ, Psb30/Ycf12, at least 3 peripheral proteins of the oxygen-evolving complex and a large number of cofactors. It forms dimeric complexes. Binds multiple chlorophylls. PSII binds additional chlorophylls, carotenoids and specific lipids. serves as cofactor.

Its subcellular location is the plastid. The protein resides in the chloroplast thylakoid membrane. One of the components of the core complex of photosystem II (PSII). It binds chlorophyll and helps catalyze the primary light-induced photochemical processes of PSII. PSII is a light-driven water:plastoquinone oxidoreductase, using light energy to abstract electrons from H(2)O, generating O(2) and a proton gradient subsequently used for ATP formation. The protein is Photosystem II CP47 reaction center protein of Guizotia abyssinica (Niger).